The chain runs to 72 residues: General transcription factor IIH subunit 5 (72 aa).

Belongs to the TFB5 family. In terms of assembly, component of the 7-subunit TFIIH core complex composed of XPB/repB, XPD/repD, gtf2h1, gtf2h2, gtf2h3, gtf2h4 and gtf2h5, which is active in NER. The core complex associates with the 3-subunit CDK-activating kinase (CAK) module composed of cycH/cyclin H, cdk7 and mnat1 to form the 10-subunit holoenzyme (holo-TFIIH) active in transcription.

The protein localises to the nucleus. Component of the general transcription and DNA repair factor IIH (TFIIH) core complex, which is involved in general and transcription-coupled nucleotide excision repair (NER) of damaged DNA and, when complexed to CAK, in RNA transcription by RNA polymerase II. In NER, TFIIH acts by opening DNA around the lesion to allow the excision of the damaged oligonucleotide and its replacement by a new DNA fragment. In transcription, TFIIH has an essential role in transcription initiation. When the pre-initiation complex (PIC) has been established, TFIIH is required for promoter opening and promoter escape. Phosphorylation of the C-terminal tail (CTD) of the largest subunit of RNA polymerase II by the kinase module CAK controls the initiation of transcription. In Dictyostelium discoideum (Social amoeba), this protein is General transcription factor IIH subunit 5 (gtf2h5).